We begin with the raw amino-acid sequence, 502 residues long: Glycerol kinase (502 aa).

ADP is bound at residue T14. Residues T14, T15, and S16 each coordinate ATP. T14 provides a ligand contact to sn-glycerol 3-phosphate. R18 is a binding site for ADP. 4 residues coordinate sn-glycerol 3-phosphate: R84, E85, Y136, and D246. Residues R84, E85, Y136, D246, and Q247 each coordinate glycerol. ADP-binding residues include T268 and G311. ATP contacts are provided by T268, G311, Q315, and G412. G412 and N416 together coordinate ADP.

It belongs to the FGGY kinase family. As to quaternary structure, homotetramer and homodimer (in equilibrium). Heterodimer with EIIA-Glc. Binds 1 zinc ion per glycerol kinase EIIA-Glc dimer. The zinc ion is important for dimerization.

The catalysed reaction is glycerol + ATP = sn-glycerol 3-phosphate + ADP + H(+). It functions in the pathway polyol metabolism; glycerol degradation via glycerol kinase pathway; sn-glycerol 3-phosphate from glycerol: step 1/1. With respect to regulation, activity of this regulatory enzyme is affected by several metabolites. Allosterically and non-competitively inhibited by fructose 1,6-bisphosphate (FBP) and unphosphorylated phosphocarrier protein EIIA-Glc (III-Glc), an integral component of the bacterial phosphotransferase (PTS) system. Key enzyme in the regulation of glycerol uptake and metabolism. Catalyzes the phosphorylation of glycerol to yield sn-glycerol 3-phosphate. The protein is Glycerol kinase of Enterobacter sp. (strain 638).